The chain runs to 711 residues: Protein ACTIVITY OF BC1 COMPLEX KINASE 3, chloroplastic (711 aa).

A chloroplast-targeting transit peptide spans 1 to 42 (MSLVVGQSLGLTLVGDGLSLRNSKINVGKSKFFSVNRRRLAR). A Protein kinase domain is found at 216-546 (SVSPEPIAAA…IELLFKDGKF (331 aa)). ATP contacts are provided by residues 222–230 (IAAASLGQV) and Lys245. The active-site Proton acceptor is Asp379.

This sequence belongs to the protein kinase superfamily. ADCK protein kinase family. In terms of assembly, interacts with ABC1K1 in plastoglobules (PG). Interacts with PGM48.

It localises to the plastid. It is found in the chloroplast. The protein resides in the plastoglobule. The enzyme catalyses L-seryl-[protein] + ATP = O-phospho-L-seryl-[protein] + ADP + H(+). The catalysed reaction is L-threonyl-[protein] + ATP = O-phospho-L-threonyl-[protein] + ADP + H(+). Its function is as follows. Kinase that can phosphorylate the tocopherol cyclase VTE1, a key enzyme of tocopherol (vitamin E) metabolism and involved in the recycling of oxidated alpha-tocopherol quinone, possibly stabilizing it at plastoglobules. Also regulates membrane prenylquinone composition. Required for photooxidative stress responses to prevent photosystem II core and chlorophyll degradations. Together with ABC1K1, contributes to plastoglobule (PG) function in prenyl-lipid metabolism, stress response, and thylakoid remodeling. Promotes photodamage of chloroplasts under continuous red light, thus working in opposition to ABC1K1. This Arabidopsis thaliana (Mouse-ear cress) protein is Protein ACTIVITY OF BC1 COMPLEX KINASE 3, chloroplastic.